The primary structure comprises 1056 residues: PH and SEC7 domain-containing protein 4 (1056 aa).

Residues 25-42 are compositionally biased toward basic and acidic residues; the sequence is LEPHPGECPRETCSHEDP. Disordered stretches follow at residues 25–71, 87–149, 195–239, 340–362, 388–533, and 546–581; these read LEPH…SGVE, CQEQ…QNRS, LPGD…QWGA, GAPA…APSA, VQPW…GDVQ, and LRTP…LANG. Composition is skewed to polar residues over residues 88 to 99 and 128 to 137; these read QEQTRATDPPES and NTASPGSPVN. Phosphoserine is present on residues Ser-131, Ser-134, and Ser-143. The segment covering 207 to 220 has biased composition (acidic residues); it reads ENEDSGEDSSEPEG. Residue Ser-413 is modified to Phosphoserine. The segment covering 414 to 423 has biased composition (basic and acidic residues); it reads QDRDEREGGH. Low complexity predominate over residues 438–456; sequence RSPASSPEPSSPESESRGP. Ser-448, Ser-469, and Ser-491 each carry phosphoserine. Composition is skewed to polar residues over residues 466–476 and 486–502; these read QEGSPQLQHHS and DASQ…QPSS. Positions 504–522 are enriched in basic and acidic residues; the sequence is KKKEAGEAPKPGEEVKSEG. The 193-residue stretch at 544–736 folds into the SEC7 domain; it reads ENLRTPMNSS…KALYWSIRSE (193 aa). Positions 548 to 567 are enriched in polar residues; the sequence is TPMNSSWLPGSPMPQAQSPE. The PH domain maps to 776 to 892; that stretch reads PTYKQGILAR…WIARINLAAA (117 aa). Residues 921-976 adopt a coiled-coil conformation; the sequence is SSLEEQHRSHENCLDAAADDLLDLQRNLPERRGRGRELEEHRLRKEYLEYEKTRYE. Residues 1004–1056 are disordered; sequence AGGTREPKLSLKKSHSSPSLHQDEAPTTAKVKRNISERRTYRKIIPKRNRNQL. Residues Ser-1019 and Ser-1022 each carry the phosphoserine modification. The span at 1043-1056 shows a compositional bias: basic residues; the sequence is TYRKIIPKRNRNQL.

In terms of tissue distribution, widely expressed. Highest levels of expression are found in placenta, pancreas, spleen, thymus and peripheral blood.

The protein localises to the cell membrane. The protein resides in the cell projection. It localises to the ruffle membrane. In terms of biological role, guanine nucleotide exchange factor for ARF6 and ARL14/ARF7. Through ARL14 activation, controls the movement of MHC class II-containing vesicles along the actin cytoskeleton in dendritic cells. Involved in membrane recycling. Interacts with several phosphatidylinositol phosphate species, including phosphatidylinositol 3,4-bisphosphate, phosphatidylinositol 3,5-bisphosphate and phosphatidylinositol 4,5-bisphosphate. In Homo sapiens (Human), this protein is PH and SEC7 domain-containing protein 4 (PSD4).